A 519-amino-acid polypeptide reads, in one-letter code: MDSLHCLETLLLGFFVLLPCFFYFVWKKPNNKIKEPPQPAGAWPIIGHLHLLARGDLPHKILSSFADKNGPVFKIQLGVHQALVVNNSEIAKECFTTNDRFFLNRPSGVAAKIMGYNYVMLGVAPYGPYWRDMRKIIMLEFLSNRRLQSLKHVWHSEISISSKELYKLWETQNIDFCLVDMKQWLADLTLNMSVKMVVGKRFFGSASASACEETESSNCPKTLRNMFRLMGSFVLSDYLPYLRWLDLGGHEKEMKRTVKELDILFKGWLDEHKRKRLSGGKEDDDQDFMDVMLSILEESKLGNDVDTINKTACLAIILGGADTTWATLTWALSLLLNNPNALKKAQDELDLHVGRDRNVDESDLVKLTYIDAIIKETLRLYPPGPLLGPRVVTEDCTIAGYHVRAGTRLIVNAWKIQRDPLVWSQPHEYQPERFLERDVDMKGQHFELIPFGSGRRACPAISLALQVLPLTLAHILHGFELRTPNQNKVDMTETPGIVHAKATPLEVLVAPRISPKCFV.

The chain crosses the membrane as a helical span at residues 6 to 26 (CLETLLLGFFVLLPCFFYFVW). Cys458 provides a ligand contact to heme.

This sequence belongs to the cytochrome P450 family. Heme is required as a cofactor. In terms of tissue distribution, rhizome-specific expression.

The protein localises to the membrane. It carries out the reaction (-)-4'-desmethyl-deoxypodophyllotoxin + reduced [NADPH--hemoprotein reductase] + O2 = 4'-demethylepipodophyllotoxin + oxidized [NADPH--hemoprotein reductase] + H2O + H(+). The protein operates within aromatic compound metabolism; phenylpropanoid biosynthesis. Its function is as follows. Cytochrome P450 involved in the biosynthesis of etoposide, a chemotherapeutic compound of the topoisomerase inhibitor family. Catalyzes the hydroxylation of deoxypodophyllotoxin to form epipodophyllotoxin. The protein is Demethylepipodophyllotoxin synthase of Sinopodophyllum hexandrum (Himalayan may apple).